The primary structure comprises 177 residues: MSRIAKAPISVPAGVEVTLKGQEITVKGKNGELTRTINNAVEVKVEENVITTLPREGVTDAWAQAGTARALINNMIVGTHEGYEKKLQLVGVGYRAAAKGKTLDLTLGFSHPVHFAVPEGITIETPSQTEVLVKGVDKQLVGQTAANIRAYRKPEPYKGKGVRYSDENVRRKEAKKK.

Basic and acidic residues predominate over residues 157–171 (YKGKGVRYSDENVRR). Residues 157–177 (YKGKGVRYSDENVRRKEAKKK) form a disordered region.

The protein belongs to the universal ribosomal protein uL6 family. As to quaternary structure, part of the 50S ribosomal subunit.

Its function is as follows. This protein binds to the 23S rRNA, and is important in its secondary structure. It is located near the subunit interface in the base of the L7/L12 stalk, and near the tRNA binding site of the peptidyltransferase center. This Pseudoalteromonas translucida (strain TAC 125) protein is Large ribosomal subunit protein uL6.